Reading from the N-terminus, the 267-residue chain is MEVKIKQVDEVKISRYIIKETMEDWYQFVESDVVIVGAGPSGLSAAYYLAKAGLKTLVFERRLSFGGGIGGGAMLFHKLIIEKPADEILREVNIRLKEVEEGVYVVDSAEFMAKLATAAIDAGAKIIHGVTVDDVIFRENPLRVAGVAVEWTATQMASLHVDPIFISAKAVVDATGHDAEVISVAARKIPELGIVIPGEKSAYSERAEELTVINTGKVAEGLYATGMAVTEVKGLPRMGPIFGAMVLSGKAVAGEITKDLLKSEIRA.

NAD(+)-binding positions include Ser41, 60-61, Gly68, Val132, and 160-162; these read ER and HVD. Fe cation-binding residues include Asp162 and His177. Met227 is an NAD(+) binding site. Position 237 (Arg237) interacts with glycine.

This sequence belongs to the THI4 family. In terms of assembly, homooctamer; tetramer of dimers. Fe(2+) is required as a cofactor.

It carries out the reaction hydrogen sulfide + glycine + NAD(+) = ADP-5-ethyl-4-methylthiazole-2-carboxylate + nicotinamide + 3 H2O + H(+). The protein operates within cofactor biosynthesis; thiamine diphosphate biosynthesis. Its function is as follows. Involved in the biosynthesis of the thiazole moiety of thiamine. Catalyzes the conversion of NAD and glycine to adenosine diphosphate 5-(2-hydroxyethyl)-4-methylthiazole-2-carboxylate (ADT), an adenylated thiazole intermediate, using free sulfide as a source of sulfur. This chain is Thiamine thiazole synthase, found in Saccharolobus solfataricus (strain ATCC 35092 / DSM 1617 / JCM 11322 / P2) (Sulfolobus solfataricus).